We begin with the raw amino-acid sequence, 174 residues long: Small ribosomal subunit protein uS5 (174 aa).

One can recognise an S5 DRBM domain in the interval 17–80 (WQERVVQIRR…ADGKKHLIDV (64 aa)).

Belongs to the universal ribosomal protein uS5 family. As to quaternary structure, part of the 30S ribosomal subunit. Contacts proteins S4 and S8.

In terms of biological role, with S4 and S12 plays an important role in translational accuracy. Its function is as follows. Located at the back of the 30S subunit body where it stabilizes the conformation of the head with respect to the body. The chain is Small ribosomal subunit protein uS5 from Thermosynechococcus vestitus (strain NIES-2133 / IAM M-273 / BP-1).